Here is a 383-residue protein sequence, read N- to C-terminus: Dimethylsulfoniopropionate lyase 3 (383 aa).

It belongs to the aspartate/glutamate racemases family. ALMA1 subfamily. Homotetramer.

It carries out the reaction S,S-dimethyl-beta-propiothetin = acrylate + dimethyl sulfide + H(+). Mediates cleavage of dimethylsulfoniopropionate (DMSP) into dimethyl sulfide (DMS) and acrylate. DMS is the principal form by which sulfur is transported from oceans to the atmosphere and is a key component of the ocean sulfur cycle. This is Dimethylsulfoniopropionate lyase 3 from Emiliania huxleyi (strain CCMP1516).